Here is a 141-residue protein sequence, read N- to C-terminus: Sperm-associated microtubule inner protein 10 (141 aa).

A compositionally biased stretch (basic and acidic residues) spans 1–16 (MASEKDDGPALPKLDD). The interval 1–33 (MASEKDDGPALPKLDDDNQTAENTCKPAEEQPQ) is disordered.

Microtubule inner protein component of sperm flagellar doublet microtubules. Expressed predominantly in the testis.

It localises to the cytoplasm. The protein localises to the cytoskeleton. The protein resides in the flagellum axoneme. In terms of biological role, microtubule inner protein (MIP) part of the dynein-decorated doublet microtubules (DMTs) in flagellum axoneme, which is required for flagellum beating. May serve to reinforce and thus stabilize the microtubule structure in the sperm flagella. Involved in the regulation of sperm motility. This Mus musculus (Mouse) protein is Sperm-associated microtubule inner protein 10 (Spmip10).